The following is a 93-amino-acid chain: Cell division topological specificity factor (93 aa).

This sequence belongs to the MinE family.

Prevents the cell division inhibition by proteins MinC and MinD at internal division sites while permitting inhibition at polar sites. This ensures cell division at the proper site by restricting the formation of a division septum at the midpoint of the long axis of the cell. The chain is Cell division topological specificity factor from Synechococcus sp. (strain WH7803).